The sequence spans 67 residues: Transcription elongation factor Spt4 (67 aa).

Positions 7, 10, 19, and 22 each coordinate Zn(2+).

It belongs to the archaeal Spt4 family. In terms of assembly, heterodimer composed of Spt4 and Spt5. Interacts with RNA polymerase (RNAP). The complex interacts with FttA.

The protein localises to the chromosome. Functionally, the Stp4-Spt5 complex stimulates transcription elongation on both naked DNA and histone-bound DNA (chromatin), facilitating transcription through the histone barrier. Neither protein functions alone. The complex also stimulates the transcription termination activity of FttA, neither protein alone stimulates FttA-dependent termination. This is Transcription elongation factor Spt4 from Thermococcus kodakarensis (strain ATCC BAA-918 / JCM 12380 / KOD1) (Pyrococcus kodakaraensis (strain KOD1)).